The sequence spans 333 residues: Ornithine carbamoyltransferase (333 aa).

Residues S56–T59, R107, and H134–Q137 contribute to the carbamoyl phosphate site. Residues N167, D231, and S235 to M236 contribute to the L-ornithine site. Residues C273 to L274 and R318 contribute to the carbamoyl phosphate site.

Belongs to the aspartate/ornithine carbamoyltransferase superfamily. OTCase family.

Its subcellular location is the cytoplasm. The enzyme catalyses carbamoyl phosphate + L-ornithine = L-citrulline + phosphate + H(+). The protein operates within amino-acid degradation; L-arginine degradation via ADI pathway; carbamoyl phosphate from L-arginine: step 2/2. Functionally, reversibly catalyzes the transfer of the carbamoyl group from carbamoyl phosphate (CP) to the N(epsilon) atom of ornithine (ORN) to produce L-citrulline. The protein is Ornithine carbamoyltransferase of Clostridium botulinum (strain ATCC 19397 / Type A).